The sequence spans 25 residues: M-poneritoxin-Ng1a (25 aa).

In terms of tissue distribution, expressed by the venom gland.

It is found in the secreted. The protein resides in the target cell membrane. Its function is as follows. Has a broad spectrum of activity against both Gram-positive and Gram-negative bacteria and S.cerevisiae. Has insecticidal and hemolytic activities. May act by disrupting the integrity of the bacterial cell membrane. The polypeptide is M-poneritoxin-Ng1a (Neoponera goeldii (Ponerine ant)).